The primary structure comprises 120 residues: U-scoloptoxin(20)-Cw1a (120 aa).

An N-terminal signal peptide occupies residues 1-26 (MNSTDRLLGVLLAVVALILLIRISEA). The tract at residues 87–106 (SSGKSLTTTKDSSESRKKEI) is disordered. The segment covering 97–106 (DSSESRKKEI) has biased composition (basic and acidic residues).

This sequence belongs to the scoloptoxin-20 family. Post-translationally, contains 3 disulfide bonds. As to expression, expressed by the venom gland.

Its subcellular location is the secreted. The chain is U-scoloptoxin(20)-Cw1a from Cormocephalus westwoodi (Westwood's green centipede).